We begin with the raw amino-acid sequence, 433 residues long: uncharacterized protein (433 aa).

11 consecutive transmembrane segments (helical) span residues 28-48 (FAAL…SHII), 56-76 (IYGW…YPFF), 102-122 (IWIF…AVGL), 126-146 (AILT…FIVI), 164-184 (LSKL…IIAL), 207-227 (ALGF…ISAI), 250-270 (FNVG…LGAL), 304-324 (GLIA…VIDG), 345-365 (SYLN…IFYF), 375-395 (FAMI…LSLV), and 406-426 (LLWL…LFIA).

It is found in the cell membrane. This is an uncharacterized protein from Pasteurella multocida (strain Pm70).